The following is a 933-amino-acid chain: Phospholipase D2 (933 aa).

2 disordered regions span residues 1–20 (MAAT…SSQL) and 134–160 (SPAP…RRTA). Residues 65-195 (VIAQVVGTER…TEFLEVSQLS (131 aa)) form the PX domain. In terms of domain architecture, PH spans 203–311 (KGLEGVIRKR…WAQEITELAQ (109 aa)). PLD phosphodiesterase domains follow at residues 437 to 464 (TLWA…AYGR) and 751 to 778 (ELIY…NDRS). The catalytic stretch occupies residues 441 to 788 (HHEKLLVVDQ…LLGKRDSELA (348 aa)).

It belongs to the phospholipase D family. As to quaternary structure, interacts with PIP5K1B. Interacts with EGFR. In terms of processing, phosphorylated by FGR.

It localises to the cell membrane. It catalyses the reaction a 1,2-diacyl-sn-glycero-3-phosphocholine + H2O = a 1,2-diacyl-sn-glycero-3-phosphate + choline + H(+). It carries out the reaction 1,2-dihexadecanoyl-sn-glycero-3-phosphocholine + H2O = 1,2-dihexadecanoyl-sn-glycero-3-phosphate + choline + H(+). In terms of biological role, function as phospholipase selective for phosphatidylcholine. May have a role in signal-induced cytoskeletal regulation and/or endocytosis. The polypeptide is Phospholipase D2 (PLD2) (Bos taurus (Bovine)).